A 927-amino-acid chain; its full sequence is Calmodulin-binding transcription activator CBT (927 aa).

A DNA-binding region (CG-1) is located at residues 26–152 (YEKLVAEAAA…YRQTAEENAM (127 aa)). Residues 70 to 96 (LYDRKVVRNFRKDGHNWKKKKDGRTVQ) are necessary and sufficient for nuclear localization. The Nuclear localization signal signature appears at 72–79 (DRKVVRNF). The stretch at 609–638 (SGWTALHWAAYHGRERMVATLLSAGANPSL) is one ANK repeat. 2 IQ domains span residues 757-786 (EIVAAMKIQHAFRNYNRKKAMRAAARIQSH) and 799-828 (MRRQVIRIQAAYRGHQVRRQYRKVIWSVGI). The segment at 826–845 (VGIVEKAILRWRKKRKGLRG) is calmodulin-binding. Positions 830-851 (EKAILRWRKKRKGLRGIASGMP) are necessary and sufficient for nuclear localization. Residues 882–911 (FNRSVVRVQALFRSYKAQQEYRRMKIAHEE) form the IQ 3 domain.

This sequence belongs to the CAMTA family.

Its subcellular location is the nucleus. Transcriptional activation activity is strongly reduced by calmodulin. In terms of biological role, transcription activator that binds calmodulin in a calcium-dependent manner in vitro. Binds to the DNA consensus sequence 5'-T[AC]CG[CT]GT[GT][GT][GT][GT]T[GT]CG-3'. This Oryza sativa subsp. japonica (Rice) protein is Calmodulin-binding transcription activator CBT.